Reading from the N-terminus, the 58-residue chain is Small ribosomal subunit protein bS21 (58 aa).

It belongs to the bacterial ribosomal protein bS21 family.

The polypeptide is Small ribosomal subunit protein bS21 (Lactobacillus acidophilus (strain ATCC 700396 / NCK56 / N2 / NCFM)).